A 1048-amino-acid chain; its full sequence is Bifunctional heparan sulfate N-deacetylase/N-sulfotransferase (1048 aa).

Topologically, residues 1 to 172 (MTISGGNQHN…RRCFGINVRR (172 aa)) are cytoplasmic. A helical; Signal-anchor for type II membrane protein membrane pass occupies residues 173-192 (CVLALLAITMVSIFYYTHYV). The interval 192–752 (VDTGVFNGLI…VRHKKIWSKT (561 aa)) is heparan sulfate N-deacetylase. Topologically, residues 193–1048 (DTGVFNGLIQ…WLKDDLSTGT (856 aa)) are lumenal. Asn-388 and Asn-555 each carry an N-linked (GlcNAc...) asparagine glycan. The heparan sulfate N-sulfotransferase stretch occupies residues 753-1048 (KNCDSLPKFL…WLKDDLSTGT (296 aa)). The For sulfotransferase activity role is filled by Lys-768. Residue 768–772 (KTGTT) coordinates 3'-phosphoadenylyl sulfate. N-linked (GlcNAc...) asparagine glycosylation is present at Asn-823. A 3'-phosphoadenylyl sulfate-binding site is contributed by Ser-877. An N-linked (GlcNAc...) asparagine glycan is attached at Asn-892. Cys-983 and Cys-993 are joined by a disulfide. 998-1002 (KGRQY) is a 3'-phosphoadenylyl sulfate binding site.

It belongs to the sulfotransferase 1 family. NDST subfamily. Monomer.

It localises to the golgi apparatus membrane. The enzyme catalyses alpha-D-glucosaminyl-[heparan sulfate](n) + 3'-phosphoadenylyl sulfate = N-sulfo-alpha-D-glucosaminyl-[heparan sulfate](n) + adenosine 3',5'-bisphosphate + 2 H(+). Its pathway is glycan metabolism; heparan sulfate biosynthesis. It functions in the pathway glycan metabolism; heparin biosynthesis. In terms of biological role, essential bifunctional enzyme that catalyzes both the N-deacetylation and the N-sulfation of glucosamine (GlcNAc) of the glycosaminoglycan in heparan sulfate. Modifies the GlcNAc-GlcA disaccharide repeating sugar backbone to make N-sulfated heparosan, a prerequisite substrate for later modifications in heparin biosynthesis. Plays a role in diffusion of morphogen wingless (wg) via its role in heparan sulfate proteoglycans (HSPGs) biosynthesis, HSPGs being required for movement of wg morphogens. Required for wg signaling during both embryonic and imaginal disk development. Also required for FGF receptor signaling. This chain is Bifunctional heparan sulfate N-deacetylase/N-sulfotransferase (sfl), found in Drosophila melanogaster (Fruit fly).